We begin with the raw amino-acid sequence, 179 residues long: MKMFESLDSSATKSGRDLWAEICSCLPNPAQEDVSNNAFSDSFMDSHPAGEGSMAAADSAVQPALKPWAPLHDSEVYLASLEKKLRRIKGLNEEVTSKDMLRTLAQAKKECWDRFLQEKLASEFFVDGLDSDESTLEHFKRWLQPDKVAINTEEVQFLIPPESQAEKPEARDEPAAAEQ.

Positions 75-98 form a coiled coil; that stretch reads EVYLASLEKKLRRIKGLNEEVTSK. Positions 157-179 are disordered; the sequence is FLIPPESQAEKPEARDEPAAAEQ. Residues 164-179 show a composition bias toward basic and acidic residues; that stretch reads QAEKPEARDEPAAAEQ.

In terms of assembly, interacts with AP2S1; the interaction is direct and mediates association with adaptor protein complex 2 (AP-2).

The protein resides in the membrane. It is found in the coated pit. Regulates clathrin-mediated endocytsois of cargos such as transferrin probably through the association and modulation of adaptor protein complex 2 (AP-2). Has a role in ciliogenesis. Required for proper cephalic and left/right axis development. The chain is Coiled-coil domain-containing protein 32 (Ccdc32) from Rattus norvegicus (Rat).